The chain runs to 168 residues: Low molecular weight antigen MTB12 (168 aa).

The N-terminal stretch at 1–22 (MKMVKSIAAGLTAAAAIGAAAA) is a signal peptide. Positions 23 to 48 (GVTSIMAGGPVVYQMQPVVFGAPLPL) are excised as a propeptide.

This sequence belongs to the MTB12 family.

It is found in the secreted. Its function is as follows. May play a role in the development of protective immune responses. This Mycobacterium tuberculosis (strain CDC 1551 / Oshkosh) protein is Low molecular weight antigen MTB12 (mtb12).